The following is a 311-amino-acid chain: Acetaldehyde dehydrogenase (311 aa).

Cys-131 serves as the catalytic Acyl-thioester intermediate. Residues 162–170 and Asn-273 each bind NAD(+); that span reads SVGPGTRKN.

The protein belongs to the acetaldehyde dehydrogenase family.

It carries out the reaction acetaldehyde + NAD(+) + CoA = acetyl-CoA + NADH + H(+). This chain is Acetaldehyde dehydrogenase, found in Ralstonia pickettii (strain 12J).